The chain runs to 358 residues: Homoserine O-acetyltransferase (358 aa).

Residues 41–343 enclose the AB hydrolase-1 domain; it reads NAVLICHALT…DYGHDAFLVD (303 aa). S143 (nucleophile) is an active-site residue. Position 212 (R212) interacts with substrate. Residues D304 and H337 contribute to the active site. Position 338 (D338) interacts with substrate.

The protein belongs to the AB hydrolase superfamily. MetX family. Homodimer.

Its subcellular location is the cytoplasm. The catalysed reaction is L-homoserine + acetyl-CoA = O-acetyl-L-homoserine + CoA. Its pathway is amino-acid biosynthesis; L-methionine biosynthesis via de novo pathway; O-acetyl-L-homoserine from L-homoserine: step 1/1. Functionally, transfers an acetyl group from acetyl-CoA to L-homoserine, forming acetyl-L-homoserine. This Haemophilus influenzae (strain 86-028NP) protein is Homoserine O-acetyltransferase.